The primary structure comprises 309 residues: Aspartate carbamoyltransferase catalytic subunit (309 aa).

Carbamoyl phosphate contacts are provided by arginine 49 and threonine 50. Lysine 77 is a binding site for L-aspartate. Positions 99, 127, and 130 each coordinate carbamoyl phosphate. 2 residues coordinate L-aspartate: arginine 160 and arginine 211. Carbamoyl phosphate-binding residues include alanine 252 and proline 253.

Belongs to the aspartate/ornithine carbamoyltransferase superfamily. ATCase family. As to quaternary structure, heterododecamer (2C3:3R2) of six catalytic PyrB chains organized as two trimers (C3), and six regulatory PyrI chains organized as three dimers (R2).

The catalysed reaction is carbamoyl phosphate + L-aspartate = N-carbamoyl-L-aspartate + phosphate + H(+). It participates in pyrimidine metabolism; UMP biosynthesis via de novo pathway; (S)-dihydroorotate from bicarbonate: step 2/3. Functionally, catalyzes the condensation of carbamoyl phosphate and aspartate to form carbamoyl aspartate and inorganic phosphate, the committed step in the de novo pyrimidine nucleotide biosynthesis pathway. The polypeptide is Aspartate carbamoyltransferase catalytic subunit (Geobacillus sp. (strain WCH70)).